Here is a 129-residue protein sequence, read N- to C-terminus: Large ribosomal subunit protein bL21 (129 aa).

The tract at residues 102–129 is disordered; that stretch reads TDNAKPTKGPRPKKEKVAKEATKEDAAA. Basic and acidic residues predominate over residues 116–129; sequence EKVAKEATKEDAAA.

This sequence belongs to the bacterial ribosomal protein bL21 family. Part of the 50S ribosomal subunit. Contacts protein L20.

Its function is as follows. This protein binds to 23S rRNA in the presence of protein L20. The polypeptide is Large ribosomal subunit protein bL21 (Bradyrhizobium diazoefficiens (strain JCM 10833 / BCRC 13528 / IAM 13628 / NBRC 14792 / USDA 110)).